A 918-amino-acid polypeptide reads, in one-letter code: Isoleucine--tRNA ligase (918 aa).

The 'HIGH' region signature appears at 59–69 (PYANGHLHIGH). Glutamate 570 is an L-isoleucyl-5'-AMP binding site. A 'KMSKS' region motif is present at residues 611–615 (KMSKS). Position 614 (lysine 614) interacts with ATP. Positions 893, 896, 908, and 911 each coordinate Zn(2+).

It belongs to the class-I aminoacyl-tRNA synthetase family. IleS type 1 subfamily. Monomer. It depends on Zn(2+) as a cofactor.

The protein resides in the cytoplasm. The enzyme catalyses tRNA(Ile) + L-isoleucine + ATP = L-isoleucyl-tRNA(Ile) + AMP + diphosphate. Its function is as follows. Catalyzes the attachment of isoleucine to tRNA(Ile). As IleRS can inadvertently accommodate and process structurally similar amino acids such as valine, to avoid such errors it has two additional distinct tRNA(Ile)-dependent editing activities. One activity is designated as 'pretransfer' editing and involves the hydrolysis of activated Val-AMP. The other activity is designated 'posttransfer' editing and involves deacylation of mischarged Val-tRNA(Ile). This chain is Isoleucine--tRNA ligase, found in Campylobacter concisus (strain 13826).